We begin with the raw amino-acid sequence, 380 residues long: Putative 8-amino-7-oxononanoate synthase (380 aa).

Residue R18 participates in substrate binding. Pyridoxal 5'-phosphate is bound at residue 105 to 106; sequence GY. H130 contacts substrate. Residues S178, 204–207, and 235–238 each bind pyridoxal 5'-phosphate; these read DEAH and TFGK. Position 238 is an N6-(pyridoxal phosphate)lysine (K238). A substrate-binding site is contributed by T352.

The protein belongs to the class-II pyridoxal-phosphate-dependent aminotransferase family. BioF subfamily. Homodimer. Pyridoxal 5'-phosphate serves as cofactor.

The enzyme catalyses 6-carboxyhexanoyl-[ACP] + L-alanine + H(+) = (8S)-8-amino-7-oxononanoate + holo-[ACP] + CO2. The protein operates within cofactor biosynthesis; biotin biosynthesis. Its function is as follows. Catalyzes the decarboxylative condensation of pimeloyl-[acyl-carrier protein] and L-alanine to produce 8-amino-7-oxononanoate (AON), [acyl-carrier protein], and carbon dioxide. The protein is Putative 8-amino-7-oxononanoate synthase (bioF) of Glaesserella parasuis serovar 5 (strain SH0165) (Haemophilus parasuis).